Consider the following 763-residue polypeptide: Disintegrin and metalloproteinase domain-containing protein 29 (763 aa).

The N-terminal stretch at Met1–Ala31 is a signal peptide. Positions Gly32 to Trp200 are excised as a propeptide. N-linked (GlcNAc...) asparagine glycans are attached at residues Asn164, Asn177, and Asn223. Topologically, residues Trp201–Tyr684 are extracellular. Residues Lys205–Tyr396 enclose the Peptidase M12B domain. Disulfide bonds link Cys313–Cys390, Cys353–Cys375, and Cys355–Cys360. Asn374, Asn424, Asn434, Asn475, and Asn584 each carry an N-linked (GlcNAc...) asparagine glycan. A Disintegrin domain is found at Arg403 to Asp489. A disulfide bridge connects residues Cys461 and Cys481. 3 disulfides stabilise this stretch: Cys631/Cys642, Cys636/Cys648, and Cys650/Cys659. The 30-residue stretch at Cys631 to Met660 folds into the EGF-like domain. A helical transmembrane segment spans residues Leu685–Phe705. Over Asn706–Asn763 the chain is Cytoplasmic. Residues Arg712 to Asn763 form a disordered region. Polar residues predominate over residues Arg751–Asn763.

It localises to the membrane. Its function is as follows. May be involved in spermatogenesis and fertilization. Seems to be a non catalytic metalloprotease-like protein. This is Disintegrin and metalloproteinase domain-containing protein 29 (Adam29) from Mus musculus (Mouse).